Reading from the N-terminus, the 361-residue chain is Histidinol-phosphate aminotransferase (361 aa).

Residue Lys219 is modified to N6-(pyridoxal phosphate)lysine.

The protein belongs to the class-II pyridoxal-phosphate-dependent aminotransferase family. Histidinol-phosphate aminotransferase subfamily. Homodimer. Requires pyridoxal 5'-phosphate as cofactor.

The catalysed reaction is L-histidinol phosphate + 2-oxoglutarate = 3-(imidazol-4-yl)-2-oxopropyl phosphate + L-glutamate. The protein operates within amino-acid biosynthesis; L-histidine biosynthesis; L-histidine from 5-phospho-alpha-D-ribose 1-diphosphate: step 7/9. The chain is Histidinol-phosphate aminotransferase from Acinetobacter baumannii (strain SDF).